The following is a 189-amino-acid chain: Large ribosomal subunit protein eL18 (189 aa).

Belongs to the eukaryotic ribosomal protein eL18 family.

The protein resides in the cytoplasm. This is Large ribosomal subunit protein eL18 (RpL18) from Aedes aegypti (Yellowfever mosquito).